The chain runs to 209 residues: Ras-related protein Rab-2-A (209 aa).

Position 13–21 (13–21 (GDTGVGKSC)) interacts with GTP. An Effector region motif is present at residues 35–43 (HDLTIGVEF). GTP is bound by residues 61-65 (DTAGQ), 119-122 (NKCD), and 149-151 (SAK). Residues Cys207 and Cys208 are each lipidated (S-geranylgeranyl cysteine).

The protein belongs to the small GTPase superfamily. Rab family.

It localises to the endoplasmic reticulum membrane. The protein resides in the golgi apparatus membrane. Its function is as follows. Protein transport. Probably involved in vesicular traffic. This chain is Ras-related protein Rab-2-A (RAB2A), found in Zea mays (Maize).